A 478-amino-acid polypeptide reads, in one-letter code: ATP synthase subunit beta (478 aa).

ATP is bound at residue 152-159 (GGAGVGKT).

Belongs to the ATPase alpha/beta chains family. As to quaternary structure, F-type ATPases have 2 components, CF(1) - the catalytic core - and CF(0) - the membrane proton channel. CF(1) has five subunits: alpha(3), beta(3), gamma(1), delta(1), epsilon(1). CF(0) has three main subunits: a(1), b(2) and c(9-12). The alpha and beta chains form an alternating ring which encloses part of the gamma chain. CF(1) is attached to CF(0) by a central stalk formed by the gamma and epsilon chains, while a peripheral stalk is formed by the delta and b chains.

The protein localises to the cell membrane. It carries out the reaction ATP + H2O + 4 H(+)(in) = ADP + phosphate + 5 H(+)(out). Produces ATP from ADP in the presence of a proton gradient across the membrane. The catalytic sites are hosted primarily by the beta subunits. The sequence is that of ATP synthase subunit beta from Wolbachia pipientis subsp. Culex pipiens (strain wPip).